The following is a 320-amino-acid chain: Malate dehydrogenase (320 aa).

Residues 10–15 and D34 contribute to the NAD(+) site; that span reads GSGMIG. Substrate is bound by residues R83 and R89. NAD(+) contacts are provided by residues N96 and 119-121; that span reads ITN. Residues N121 and R152 each contribute to the substrate site. The active-site Proton acceptor is H176.

It belongs to the LDH/MDH superfamily. MDH type 3 family.

The enzyme catalyses (S)-malate + NAD(+) = oxaloacetate + NADH + H(+). Catalyzes the reversible oxidation of malate to oxaloacetate. The chain is Malate dehydrogenase from Allorhizobium ampelinum (strain ATCC BAA-846 / DSM 112012 / S4) (Agrobacterium vitis (strain S4)).